The sequence spans 1152 residues: P3N-PIPO polyprotein (1152 aa).

The 146-residue stretch at 292-437 folds into the Peptidase S30 domain; sequence VMNQQTLTAL…HTLTHRMVQY (146 aa). Catalysis depends on for P1 proteinase activity residues H345, D354, and S388. The short motif at 489–492 is the Involved in interaction with stylet and aphid transmission element; the sequence is KITC. Residues 747 to 749 carry the Involved in virions binding and aphid transmission motif; sequence PTK. Residues 773 to 895 enclose the Peptidase C6 domain; sequence MFVAKDGYCY…ESEMQHYRVG (123 aa). Active-site for helper component proteinase activity residues include C781 and H854.

Belongs to the potyviridae P3N-PIPO polyprotein family. As to quaternary structure, interacts (via PIPO domain) with host PCaP1 protein; this interaction may help to anchor the movement complex to the plasma membrane from which the complex could move to the plasmodesmata. Potyviral RNA is expressed as two polyproteins which undergo post-translational proteolytic processing. Genome polyprotein is processed by NIa-pro, P1 and HC-pro proteinases resulting in the production of at least ten individual proteins. P3N-PIPO is cleaved by P1 and HC-pro proteinases resulting in the production of three individual proteins. The P1 proteinase and the HC-pro cleave only their respective C-termini autocatalytically.

It is found in the host cell junction. Its subcellular location is the host plasmodesma. The enzyme catalyses Hydrolyzes a Gly-|-Gly bond at its own C-terminus, commonly in the sequence -Tyr-Xaa-Val-Gly-|-Gly, in the processing of the potyviral polyprotein.. Functionally, required for aphid transmission and also has proteolytic activity. Only cleaves a Gly-Gly dipeptide at its own C-terminus. Interacts with virions and aphid stylets. Acts as a suppressor of RNA-mediated gene silencing, also known as post-transcriptional gene silencing (PTGS), a mechanism of plant viral defense that limits the accumulation of viral RNAs. May have RNA-binding activity. Its function is as follows. Allows efficient cell to cell propagation, by bypassing the host cell wall barrier. Transports viral genome to neighboring plant cells directly through plasmosdesmata, without any budding. In Carthamus tinctorius (Safflower), this protein is P3N-PIPO polyprotein.